The primary structure comprises 571 residues: Dihydroxy-acid dehydratase (571 aa).

Cysteine 56 contributes to the [2Fe-2S] cluster binding site. Residue aspartate 88 coordinates Mg(2+). Cysteine 129 contributes to the [2Fe-2S] cluster binding site. Mg(2+) is bound by residues aspartate 130 and lysine 131. The residue at position 131 (lysine 131) is an N6-carboxylysine. Cysteine 201 is a [2Fe-2S] cluster binding site. Glutamate 452 is a binding site for Mg(2+). The active-site Proton acceptor is the serine 478.

This sequence belongs to the IlvD/Edd family. As to quaternary structure, homodimer. The cofactor is [2Fe-2S] cluster. Mg(2+) serves as cofactor.

It catalyses the reaction (2R)-2,3-dihydroxy-3-methylbutanoate = 3-methyl-2-oxobutanoate + H2O. It carries out the reaction (2R,3R)-2,3-dihydroxy-3-methylpentanoate = (S)-3-methyl-2-oxopentanoate + H2O. It functions in the pathway amino-acid biosynthesis; L-isoleucine biosynthesis; L-isoleucine from 2-oxobutanoate: step 3/4. It participates in amino-acid biosynthesis; L-valine biosynthesis; L-valine from pyruvate: step 3/4. Its function is as follows. Functions in the biosynthesis of branched-chain amino acids. Catalyzes the dehydration of (2R,3R)-2,3-dihydroxy-3-methylpentanoate (2,3-dihydroxy-3-methylvalerate) into 2-oxo-3-methylpentanoate (2-oxo-3-methylvalerate) and of (2R)-2,3-dihydroxy-3-methylbutanoate (2,3-dihydroxyisovalerate) into 2-oxo-3-methylbutanoate (2-oxoisovalerate), the penultimate precursor to L-isoleucine and L-valine, respectively. This is Dihydroxy-acid dehydratase from Streptococcus suis (strain 98HAH33).